Here is a 116-residue protein sequence, read N- to C-terminus: VTQADVGSALANLKIPGVGSLSQSTICRFESLTLSHNNMIALKPILQAWLEEAEGAQREKMNKPELFNGGEKKRKRTSIAAPEKRSLEAYFAVQPRPSSEKIAAIAEKLDLKKNVV.

Residues 1 to 54 enclose the POU-specific domain; that stretch reads VTQADVGSALANLKIPGVGSLSQSTICRFESLTLSHNNMIALKPILQAWLEEAE. Positions 56 to 79 are disordered; sequence AQREKMNKPELFNGGEKKRKRTSI. The homeobox DNA-binding region spans 72 to 116; that stretch reads KKRKRTSIAAPEKRSLEAYFAVQPRPSSEKIAAIAEKLDLKKNVV.

It belongs to the POU transcription factor family. Class-4 subfamily.

The protein resides in the nucleus. Its subcellular location is the cytoplasm. Its function is as follows. Multifunctional transcription factor with different regions mediating its different effects. Acts by binding (via its C-terminal domain) to sequences related to the consensus octamer motif 5'-ATGCAAAT-3' in the regulatory regions of its target genes. Regulates the expression of specific genes involved in differentiation and survival within a subset of neuronal lineages. It has been shown that activation of some of these genes requires its N-terminal domain, maybe through a neuronal-specific cofactor. This Gallus gallus (Chicken) protein is POU domain, class 4, transcription factor 1 (POU4F1).